Here is a 436-residue protein sequence, read N- to C-terminus: 3-ketoacyl-CoA thiolase (436 aa).

C99 acts as the Acyl-thioester intermediate in catalysis. Active-site proton acceptor residues include H392 and C422.

Belongs to the thiolase-like superfamily. Thiolase family. In terms of assembly, heterotetramer of two alpha chains (FadJ) and two beta chains (FadI).

The protein resides in the cytoplasm. The catalysed reaction is an acyl-CoA + acetyl-CoA = a 3-oxoacyl-CoA + CoA. Its pathway is lipid metabolism; fatty acid beta-oxidation. Its function is as follows. Catalyzes the final step of fatty acid oxidation in which acetyl-CoA is released and the CoA ester of a fatty acid two carbons shorter is formed. The polypeptide is 3-ketoacyl-CoA thiolase (Shewanella sediminis (strain HAW-EB3)).